The primary structure comprises 1946 residues: Integrin beta-like protein E (1946 aa).

The N-terminal stretch at Met1–Leu22 is a signal peptide. At Val23–Thr1875 the chain is on the extracellular side. 3 N-linked (GlcNAc...) asparagine glycosylation sites follow: Asn107, Asn134, and Asn203. The 38-residue stretch at Tyr423–Asp460 folds into the EGF-like domain. Intrachain disulfides connect Cys433–Cys448 and Cys450–Cys459. In terms of domain architecture, VWFA spans Asp514–Val699. N-linked (GlcNAc...) asparagine glycosylation is found at Asn705, Asn860, Asn1043, Asn1113, Asn1177, Asn1374, Asn1401, Asn1513, Asn1611, Asn1620, Asn1662, Asn1671, Asn1737, Asn1743, Asn1762, Asn1812, Asn1852, and Asn1873. A helical transmembrane segment spans residues Val1876–Trp1896. The Cytoplasmic segment spans residues Lys1897–Asp1946.

Belongs to the SIB family. Interacts with talA/talin.

It is found in the membrane. In terms of biological role, implicated in cellular adhesion. This is Integrin beta-like protein E (sibE) from Dictyostelium discoideum (Social amoeba).